Consider the following 485-residue polypeptide: MLLLELKKTNQTLETIHFIGIGGVGMSGIAEILYNLGYKVQGSDLVENYNTKRLESYGIKIFLGHAEQNITNVSYVVISSAINPKNPEIKEALERKIPIIRRADMLAELMRLKCSVAVSGSHGKTTTTSLVACLFEAAGLCPTVINGGIINNKSTNAYLGSSNYLIAEADESDATFIHIPSTIAIITNIDPEHLDYYRDFETLIGAFRSFITNLPFYGFAVCCIDHKIVRKLVDEITERKIVTYGIDSEDAHIIAFNINTDIASSTFDVKISLPNVLGTTIIEKITIPTPGRHNILNSLAAIAVGIELDFGIKAIKNGFNNFKGVKRRFTKVAEYNNASIIDDYAHHPEEIKATLATAKNIANKQNGKVIAIFQPHRYSRMQYLFDDFMLCFADADILYITDIYAAGENPIEGITGRSLVDKITKRKHHDKANFLAELDDAVGVIIDNAASGDMIIMMGAGNISSFANELDGRLSSRGFSCHTVV.

120–126 (GSHGKTT) provides a ligand contact to ATP.

This sequence belongs to the MurCDEF family.

Its subcellular location is the cytoplasm. It catalyses the reaction UDP-N-acetyl-alpha-D-muramate + L-alanine + ATP = UDP-N-acetyl-alpha-D-muramoyl-L-alanine + ADP + phosphate + H(+). It functions in the pathway cell wall biogenesis; peptidoglycan biosynthesis. Its function is as follows. Cell wall formation. The protein is UDP-N-acetylmuramate--L-alanine ligase of Rickettsia rickettsii (strain Iowa).